Consider the following 496-residue polypeptide: Probable cytosol aminopeptidase (496 aa).

2 residues coordinate Mn(2+): K266 and D271. K278 is an active-site residue. The Mn(2+) site is built by D289, D348, and E350. R352 is an active-site residue.

Belongs to the peptidase M17 family. It depends on Mn(2+) as a cofactor.

It localises to the cytoplasm. The catalysed reaction is Release of an N-terminal amino acid, Xaa-|-Yaa-, in which Xaa is preferably Leu, but may be other amino acids including Pro although not Arg or Lys, and Yaa may be Pro. Amino acid amides and methyl esters are also readily hydrolyzed, but rates on arylamides are exceedingly low.. The enzyme catalyses Release of an N-terminal amino acid, preferentially leucine, but not glutamic or aspartic acids.. In terms of biological role, presumably involved in the processing and regular turnover of intracellular proteins. Catalyzes the removal of unsubstituted N-terminal amino acids from various peptides. This Stutzerimonas stutzeri (strain A1501) (Pseudomonas stutzeri) protein is Probable cytosol aminopeptidase.